Consider the following 676-residue polypeptide: DNA ligase (676 aa).

NAD(+) is bound by residues 39-43 (DYVYD), 88-91 (SLND), and E118. The N6-AMP-lysine intermediate role is filled by K120. 4 residues coordinate NAD(+): R141, E175, K291, and K315. Zn(2+) is bound by residues C409, C412, C427, and C432. The region spanning 595-676 (EVESPFKDKT…MVDALDASHF (82 aa)) is the BRCT domain.

This sequence belongs to the NAD-dependent DNA ligase family. LigA subfamily. It depends on Mg(2+) as a cofactor. Mn(2+) serves as cofactor.

It carries out the reaction NAD(+) + (deoxyribonucleotide)n-3'-hydroxyl + 5'-phospho-(deoxyribonucleotide)m = (deoxyribonucleotide)n+m + AMP + beta-nicotinamide D-nucleotide.. Its function is as follows. DNA ligase that catalyzes the formation of phosphodiester linkages between 5'-phosphoryl and 3'-hydroxyl groups in double-stranded DNA using NAD as a coenzyme and as the energy source for the reaction. It is essential for DNA replication and repair of damaged DNA. The chain is DNA ligase from Enterococcus faecalis (strain ATCC 700802 / V583).